Reading from the N-terminus, the 1134-residue chain is Early transcription factor large subunit homolog (1134 aa).

The 301-residue stretch at 52–352 (KGGRAFFPCD…PNGQPLQRQQ (301 aa)) folds into the Helicase ATP-binding domain. 99–106 (WQTGTGKS) is an ATP binding site. A DEAH box motif is present at residues 281–284 (DEIH). The Helicase C-terminal domain occupies 524–725 (MMKDILSIIR…EGDKALRKHA (202 aa)).

This sequence belongs to the DEAD box helicase family. DEAH subfamily.

It localises to the virion. The enzyme catalyses ATP + H2O = ADP + phosphate + H(+). In terms of biological role, putative initation factor. The sequence is that of Early transcription factor large subunit homolog from African swine fever virus (isolate Pig/Kenya/KEN-50/1950) (ASFV).